A 112-amino-acid chain; its full sequence is Cell cycle protein GpsB (112 aa).

A coiled-coil region spans residues 42-77 (YQKMADMNNEVVKLSEENNKLKKEVEELRLRVATSR). Residues 75 to 97 (TSRPSDNKSFSSNNSSSSNNNVD) are disordered. Low complexity predominate over residues 81–95 (NKSFSSNNSSSSNNN).

This sequence belongs to the GpsB family. In terms of assembly, forms polymers through the coiled coil domains. Interacts with PBP1, MreC and EzrA.

Its subcellular location is the cytoplasm. Its function is as follows. Divisome component that associates with the complex late in its assembly, after the Z-ring is formed, and is dependent on DivIC and PBP2B for its recruitment to the divisome. Together with EzrA, is a key component of the system that regulates PBP1 localization during cell cycle progression. Its main role could be the removal of PBP1 from the cell pole after pole maturation is completed. Also contributes to the recruitment of PBP1 to the division complex. Not essential for septum formation. This is Cell cycle protein GpsB from Staphylococcus haemolyticus (strain JCSC1435).